We begin with the raw amino-acid sequence, 207 residues long: Ribonuclease HII (207 aa).

An RNase H type-2 domain is found at 10–199 (RLIAGVDEVG…VRNALLDAEL (190 aa)). A divalent metal cation is bound by residues D16, E17, and D108.

It belongs to the RNase HII family. Mn(2+) serves as cofactor. Requires Mg(2+) as cofactor.

It localises to the cytoplasm. The catalysed reaction is Endonucleolytic cleavage to 5'-phosphomonoester.. In terms of biological role, endonuclease that specifically degrades the RNA of RNA-DNA hybrids. The polypeptide is Ribonuclease HII (Erwinia tasmaniensis (strain DSM 17950 / CFBP 7177 / CIP 109463 / NCPPB 4357 / Et1/99)).